Here is a 158-residue protein sequence, read N- to C-terminus: Ecotin (158 aa).

The N-terminal stretch at 1-21 (MRLLPLASVTLLSVLCAQAFA) is a signal peptide. A disulfide bridge links Cys67 with Cys104.

This sequence belongs to the protease inhibitor I11 (ecotin) family. In terms of assembly, homodimer.

It is found in the periplasm. Its function is as follows. General inhibitor of family S1 serine proteases. In Pseudomonas fluorescens (strain ATCC BAA-477 / NRRL B-23932 / Pf-5), this protein is Ecotin.